Consider the following 392-residue polypeptide: CD2 homolog (392 aa).

An N-terminal signal peptide occupies residues 1 to 16; the sequence is MIIKLIFLICFKIVLS. The Extracellular segment spans residues 17–222; sequence IDNKTKFNET…YLDFFQVTSY (206 aa). N-linked (GlcNAc...) asparagine; by host glycosylation is found at Asn39, Asn88, Asn92, Asn106, Asn148, Asn159, Asn183, Asn191, Asn198, and Asn204. 2 disulfide bridges follow: Cys137–Cys205 and Cys144–Cys188. A helical membrane pass occupies residues 223–243; it reads IFYMIIFIVTGITVSILISII. The Cytoplasmic segment spans residues 244–392; the sequence is TFLFIRKRKH…ISLIHVDRII (149 aa). Residues 258–290 are disordered; the sequence is ESPPPESNEEEQQCHHDTTSIHEPSPREPLLPK. A compositionally biased stretch (basic and acidic residues) spans 269–283; that stretch reads QQCHHDTTSIHEPSP. 5 repeat units span residues 319-324, 325-330, 331-336, 337-342, and 343-348. The tract at residues 319–348 is 5 X 6 AA tandem repeats of K-P-C-[PRS]-[P]-[PS]; sequence KPCPPPKPCPPPKPCPPPKPCPPSKPCPPP. Residues 328 to 357 are disordered; that stretch reads PPPKPCPPPKPCPPSKPCPPPEPYSPPKPC.

It belongs to the asfivirus CD2 homolog protein family. As to quaternary structure, both glycosylated and nonglycosylated forms interact (via C-terminus) with the host AP-1 complex. In terms of processing, cleaved into two fragments of 63 kDa and 26 kDa containing respectively the glycosylated N-terminus and the nonglycosylated C-terminus. A full-length 89-kDa glycosylated form also exists.

The protein localises to the host cell membrane. It is found in the virion membrane. The protein resides in the host Golgi apparatus. In terms of biological role, may play an immunosuppressive role by inhibiting lymphocyte proliferation and subsequently facilitating viral replication and generalization of infection. Responsible for viral hemadsorption, which may help viral spread. Increases virus replication in the tick vector at the step of virus uptake or replication in the tick gut. May play a role in the host Golgi reorganization to yield viral factories. May play a role in host cell penetration. The protein is CD2 homolog of Ornithodoros (relapsing fever ticks).